The following is a 78-amino-acid chain: Small ribosomal subunit protein eS17 (78 aa).

It belongs to the eukaryotic ribosomal protein eS17 family.

The sequence is that of Small ribosomal subunit protein eS17 from Sulfurisphaera tokodaii (strain DSM 16993 / JCM 10545 / NBRC 100140 / 7) (Sulfolobus tokodaii).